We begin with the raw amino-acid sequence, 874 residues long: Translation initiation factor IF-2 (874 aa).

The disordered stretch occupies residues 1–289 (MKIKNAQLTK…KHYDEHSVQR (289 aa)). Residues 31–48 (SSSEKPTTKVPEKVAKEK) are compositionally biased toward basic and acidic residues. Residues 81 to 104 (RSSFASEDSTIPSPVSVDTESTAF) show a composition bias toward polar residues. The segment covering 105–118 (SPPVVEEVVSPLES) has biased composition (low complexity). 2 stretches are compositionally biased toward basic and acidic residues: residues 144–158 (PPKK…KEPP) and 186–198 (PKKE…KERT). The segment covering 199–211 (GTVQTKPQQSSEV) has biased composition (polar residues). Residues 228–260 (YRRDTSKRPGSDFRDRSKKDDSPKAFTGRDRYG) are compositionally biased toward basic and acidic residues. The segment covering 271-280 (RKKRVQKTKK) has biased composition (basic residues). The 170-residue stretch at 380–549 (IRPPIVAFMG…ALQAEVLELK (170 aa)) folds into the tr-type G domain. Residues 389 to 396 (GHVDHGKT) are G1. 389-396 (GHVDHGKT) contributes to the GTP binding site. The tract at residues 414–418 (AITQH) is G2. Residues 435–438 (DTPG) form a G3 region. GTP contacts are provided by residues 435-439 (DTPGH) and 489-492 (NKCD). The tract at residues 489–492 (NKCD) is G4. Residues 525-527 (SAK) are G5.

It belongs to the TRAFAC class translation factor GTPase superfamily. Classic translation factor GTPase family. IF-2 subfamily.

The protein resides in the cytoplasm. In terms of biological role, one of the essential components for the initiation of protein synthesis. Protects formylmethionyl-tRNA from spontaneous hydrolysis and promotes its binding to the 30S ribosomal subunits. Also involved in the hydrolysis of GTP during the formation of the 70S ribosomal complex. This Chlamydia abortus (strain DSM 27085 / S26/3) (Chlamydophila abortus) protein is Translation initiation factor IF-2.